Here is a 109-residue protein sequence, read N- to C-terminus: Ribulose bisphosphate carboxylase small subunit (109 aa).

The protein belongs to the RuBisCO small chain family. Heterohexadecamer of 8 large and 8 small subunits. Forms complexes of many stoichiometries with Raf1 and RbcL.

The protein localises to the carboxysome. RuBisCO catalyzes two reactions: the carboxylation of D-ribulose 1,5-bisphosphate, the primary event in carbon dioxide fixation, as well as the oxidative fragmentation of the pentose substrate in the photorespiration process. Both reactions occur simultaneously and in competition at the same active site. Although the small subunit is not catalytic it is essential for maximal activity. In Nostoc sp. (strain PCC 7120 / SAG 25.82 / UTEX 2576), this protein is Ribulose bisphosphate carboxylase small subunit.